Here is a 275-residue protein sequence, read N- to C-terminus: Orotidine 5'-phosphate decarboxylase (275 aa).

Lysine 95 acts as the Proton donor in catalysis.

The protein belongs to the OMP decarboxylase family. Type 2 subfamily.

The catalysed reaction is orotidine 5'-phosphate + H(+) = UMP + CO2. Its pathway is pyrimidine metabolism; UMP biosynthesis via de novo pathway; UMP from orotate: step 2/2. In Delftia acidovorans (strain DSM 14801 / SPH-1), this protein is Orotidine 5'-phosphate decarboxylase.